We begin with the raw amino-acid sequence, 199 residues long: Putative AgrB-like protein (199 aa).

Helical transmembrane passes span 43–63 (IIIF…FSFI), 81–101 (YGCL…TRLF), 108–128 (FYIV…PCPN), 139–159 (LKIL…LSPL), and 165–185 (ILIS…KGVI).

Belongs to the AgrB family.

The protein localises to the cell membrane. Its function is as follows. May be involved in the proteolytic processing of a quorum sensing system signal molecule precursor. The sequence is that of Putative AgrB-like protein (cfg02) from Clostridium beijerinckii (Clostridium MP).